Reading from the N-terminus, the 41-residue chain is Replication-associated protein (41 aa).

Involved in viral RNA replication. In Potato leafroll virus (strain Potato/Scotland/strain 1/1984) (PLrV), this protein is Replication-associated protein.